A 146-amino-acid chain; its full sequence is Snaclec anticoagulant protein subunit B (146 aa).

The N-terminal stretch at 1–23 (MGRFIFVSFGLLVLFLSLSGTAA) is a signal peptide. The region spanning 24–146 (DCPSDWSSYE…IANFVCEFQA (123 aa)) is the C-type lectin domain. 3 cysteine pairs are disulfide-bonded: Cys-25-Cys-36, Cys-53-Cys-142, and Cys-119-Cys-134. 3 residues coordinate Ca(2+): Ser-64, Gln-66, and Glu-70. Glu-143 is a binding site for Ca(2+).

Belongs to the snaclec family. In terms of assembly, heterodimer with subunit A of agkisacutacin or AaACP; disulfide-linked. In terms of tissue distribution, expressed by the venom gland.

The protein localises to the secreted. Its function is as follows. Anticoagulant protein which binds to the gamma-carboxyglutamic acid-domain regions of factors IX and factor X in the presence of calcium with a 1 to 1 stoichiometry. Also inhibits platelet aggregation by binding to platelet glycoprotein Ibalpha (GP1BA) and functioning as a blocker of vWF. Is devoid of hemorrhagic and lethal activities. Possesses antithrombotic and thrombolytic activities. Also hydrolyzes the Aalpha-chain of fibrinogen. Does not affect the Bbeta-chain and the gamma chain. The sequence is that of Snaclec anticoagulant protein subunit B from Deinagkistrodon acutus (Hundred-pace snake).